Reading from the N-terminus, the 77-residue chain is Large ribosomal subunit protein eL20 (77 aa).

It belongs to the eukaryotic ribosomal protein eL20 family. Part of the 50S ribosomal subunit. Binds 23S rRNA.

The protein is Large ribosomal subunit protein eL20 of Pyrococcus horikoshii (strain ATCC 700860 / DSM 12428 / JCM 9974 / NBRC 100139 / OT-3).